A 148-amino-acid chain; its full sequence is Endoribonuclease YbeY (148 aa).

Positions 113, 117, and 123 each coordinate Zn(2+).

The protein belongs to the endoribonuclease YbeY family. Zn(2+) serves as cofactor.

Its subcellular location is the cytoplasm. Its function is as follows. Single strand-specific metallo-endoribonuclease involved in late-stage 70S ribosome quality control and in maturation of the 3' terminus of the 16S rRNA. This chain is Endoribonuclease YbeY, found in Borrelia hermsii (strain HS1 / DAH).